Here is a 374-residue protein sequence, read N- to C-terminus: Pectate lyase 3 (374 aa).

The signal sequence occupies residues 1–22 (MKYLLPSAAAGLLLLAAQPTMA). A disulfide bridge links C93 with C176. D150, D152, E187, and D191 together coordinate Ca(2+). R239 is a catalytic residue. An intrachain disulfide couples C350 to C373.

The protein belongs to the polysaccharide lyase 1 family. PLADES subfamily. Ca(2+) serves as cofactor.

Its subcellular location is the secreted. It carries out the reaction Eliminative cleavage of (1-&gt;4)-alpha-D-galacturonan to give oligosaccharides with 4-deoxy-alpha-D-galact-4-enuronosyl groups at their non-reducing ends.. The protein operates within glycan metabolism; pectin degradation; 2-dehydro-3-deoxy-D-gluconate from pectin: step 2/5. Involved in maceration and soft-rotting of plant tissue. The sequence is that of Pectate lyase 3 (pel3) from Pectobacterium carotovorum (Erwinia carotovora).